Consider the following 309-residue polypeptide: Dehydrogenase/reductase SDR family member 7B (309 aa).

Over 1–5 the chain is Cytoplasmic; the sequence is MERAL. The helical; Signal-anchor for type II membrane protein transmembrane segment at 6-26 threads the bilayer; the sequence is GVGIGPLAAGTVGLLILLKVI. The Lumenal portion of the chain corresponds to 27-271; the sequence is QRLRRRPNIQ…LKAVCQKKKD (245 aa). NAD(+) contacts are provided by Ser47 and Leu49. A substrate-binding site is contributed by Ser179. Residues Tyr192, Lys196, and Thr227 each contribute to the NAD(+) site. Tyr192 acts as the Proton acceptor in catalysis.

Belongs to the short-chain dehydrogenases/reductases (SDR) family.

The protein resides in the endoplasmic reticulum membrane. Putative oxidoreductase. In Danio rerio (Zebrafish), this protein is Dehydrogenase/reductase SDR family member 7B (dhrs7b).